Here is a 665-residue protein sequence, read N- to C-terminus: Methionine--tRNA ligase (665 aa).

The short motif at Tyr-12–Ser-22 is the 'HIGH' region element. Positions Lys-308–Ser-312 match the 'KMSKS' region motif. Lys-311 lines the ATP pocket. One can recognise a tRNA-binding domain in the interval Thr-562–Gly-665.

Belongs to the class-I aminoacyl-tRNA synthetase family. MetG type 2B subfamily. Homodimer.

The protein resides in the cytoplasm. The enzyme catalyses tRNA(Met) + L-methionine + ATP = L-methionyl-tRNA(Met) + AMP + diphosphate. Functionally, is required not only for elongation of protein synthesis but also for the initiation of all mRNA translation through initiator tRNA(fMet) aminoacylation. The protein is Methionine--tRNA ligase (metG) of Streptococcus pyogenes serotype M1.